The chain runs to 1239 residues: MASAMESDSSGGSGGADAQPPLAEVDGGLARVTRQLLLSGDDPAARLRALMPLELGIFGLGDLAQPVLVRDFLNTLTLMSGHAYPAAVLRHHAYYLLRAASFSRRSFGLGHLEAALDVLASSLPPTTASPATDDPLDGSRLIAETRALAAAYRRIIEEGSGEVLAVSGPTATFAFVEELVADTYLARWDAFPREGLSFYAFNAAKTTLGRWLVTVYAETNRYPWAAAGQGQPTAADIKAMAVELVEHSGGGAGGGEGEESGGGLFHRPESLSSVVASLPLARRRAVEILGVYAEASGGQTPPVAAVPVLAFDAARLRLLEPSGALFYDYVYEALLWDQTYGVPDSVIEAFLAGMAAEMEALAARVQEAAGSRASFSPAAIEQVATVLLSAGLNETVAGDYAMMLASVPRVSRSRWRWLEATAALLESLSGFALHFFRLLPTASPTSRFARVARAAYLRAEAEAVDRRARRTSGPSTPAAAPAATAVGVGAAADPWDAVTPLRIFIVPPPAAEYEQVAGDLSSELLRSLLWVRYSRLWQAPAPAPALPCKPPLLPGEQGRRQWTAAVAAAPRTDVEAYCRSLRAGQTARADPAYVHSPFFPAAFIEFQIWPALRRVLSNELPKTRSLAALRWLVSFGSDLALPSPELTRARRPLELIYATVWEIYDGAPPMPGESPQAVGLRPLNLEGEGKAGDAGAEGAEDEEGGGPWGLSSHDAVLRIMDAVREVSGIISETISASERAAEAPPLAWPTSLFSLLFTLRYSTTAESLGLATRRFLVSGETLSEDISRLTGAAWRLCSRPLLYDAETGRVQIPLATEEEEEAVVAVKEKSVSSSPRHYSTDLQTLKSVVEGIQDVCRDAAARWALATADTATLRRRLLVPALRESRGIADHPLWAHTSEPLRPDLEELNERVEHALELGYSLTGALRRSVAYRFRDYTFARLFQPPAIDAERAEAIVRRDARPPPVFIPAPRRLPQGGADTPPPLSMDDILYLGKSICKALVDVLDHHPAAPETTPIKTYTPAMDLNPEQITVTPRSPSVLAAFARTARVQTHHLVPALTDDSPSPVGQTPPPFRILPAKKLAAILLGNGRNASKRRASRDLSPPPHGRWRAVLDSSPFSFSSSDFSDQDEGEGGEADLRGVPGGGGEGAYEEDRERPSDIDTAARAQKVETSCPRRRSPRTTPSPSRRASGGGGPDRGEAEAHTYPPYLSAAAAASRVRPRTRRGATRRPPRPTAEDE.

Low complexity predominate over residues 1–10 (MASAMESDSS). 3 disordered regions span residues 1-20 (MASA…DAQP), 672-708 (GESP…GGPW), and 1090-1239 (GRNA…AEDE). Residues 618 to 1239 (NELPKTRSLA…RPPRPTAEDE (622 aa)) are interaction with large tegument protein. Over residues 1115–1126 (DSSPFSFSSSDF) the composition is skewed to low complexity. Residues 1127–1136 (SDQDEGEGGE) show a composition bias toward acidic residues. The segment covering 1181–1190 (RTTPSPSRRA) has biased composition (low complexity). The span at 1219–1232 (VRPRTRRGATRRPP) shows a compositional bias: basic residues.

Belongs to the herpesviridae inner tegument protein family. Interacts (via C-terminus) with the large tegument protein/LTP (via N-terminus).

The protein localises to the virion tegument. It localises to the host cytoplasm. Its subcellular location is the host nucleus. It is found in the host Golgi apparatus. The protein resides in the host trans-Golgi network. Its function is as follows. Plays an essential role in cytoplasmic secondary envelopment during viral egress. Interacts with the capsid via the large tegument protein/LTP and participates in its transport to the host trans-Golgi network (TGN) where secondary envelopment occurs. Modulates tegumentation and capsid accumulation at the viral assembly complex. The polypeptide is Inner tegument protein (Homo sapiens (Human)).